The sequence spans 224 residues: Deoxyribose-phosphate aldolase (224 aa).

The active-site Proton donor/acceptor is the aspartate 92. Lysine 155 acts as the Schiff-base intermediate with acetaldehyde in catalysis. The active-site Proton donor/acceptor is lysine 184.

Belongs to the DeoC/FbaB aldolase family. DeoC type 1 subfamily.

It is found in the cytoplasm. The enzyme catalyses 2-deoxy-D-ribose 5-phosphate = D-glyceraldehyde 3-phosphate + acetaldehyde. The protein operates within carbohydrate degradation; 2-deoxy-D-ribose 1-phosphate degradation; D-glyceraldehyde 3-phosphate and acetaldehyde from 2-deoxy-alpha-D-ribose 1-phosphate: step 2/2. Functionally, catalyzes a reversible aldol reaction between acetaldehyde and D-glyceraldehyde 3-phosphate to generate 2-deoxy-D-ribose 5-phosphate. The sequence is that of Deoxyribose-phosphate aldolase from Shouchella clausii (strain KSM-K16) (Alkalihalobacillus clausii).